A 391-amino-acid polypeptide reads, in one-letter code: Probable sugar efflux transporter (391 aa).

The next 12 membrane-spanning stretches (helical) occupy residues 16-36 (VFVF…PVAL), 51-71 (VGLM…PLML), 82-102 (LLFL…AWNF), 103-123 (WVLL…WSIT), 138-158 (QALG…LPLG), 170-190 (TFGV…KLLP), 210-230 (PLLV…FTTY), 247-267 (ITTL…FLFG), 277-297 (FIAF…VFKN), 300-320 (WVIF…TIAL), 338-358 (IFSG…SIVI), and 361-381 (LGLE…LFWL).

Belongs to the major facilitator superfamily. SotB (TC 2.A.1.2) family.

The protein resides in the cell inner membrane. In terms of biological role, involved in the efflux of sugars. The physiological role may be the reduction of the intracellular concentration of toxic sugars or sugar metabolites. This is Probable sugar efflux transporter from Helicobacter pylori (strain P12).